We begin with the raw amino-acid sequence, 153 residues long: 4'-phosphopantetheinyl transferase B, mitochondrial (153 aa).

It belongs to the P-Pant transferase superfamily.

It is found in the mitochondrion. It carries out the reaction apo-[ACP] + CoA = holo-[ACP] + adenosine 3',5'-bisphosphate + H(+). Functionally, acyl-carrier-protein synthase transfers the 4'-phosphopantetheine moiety from coenzyme A to a Ser of an acyl-carrier-protein. The 4'-phosphopantetheine (4'-PPT) portion of CoA provides the essential prosthetic group for a number of carrier proteins and multi-domain enzymes, priming them for the acceptance of acyl building blocks in fatty acid synthesis and many aspects of secondary metabolism mediated by polyketide synthases (PKSs) and non-ribosomal peptide synthetases (NRPSs). PptB is specific for the mitochondrial acyl carrier protein acpA. The sequence is that of 4'-phosphopantetheinyl transferase B, mitochondrial from Aspergillus fumigatus (strain ATCC MYA-4609 / CBS 101355 / FGSC A1100 / Af293) (Neosartorya fumigata).